Here is a 54-residue protein sequence, read N- to C-terminus: Secreted virulence factor MC69 (54 aa).

A signal peptide spans 1–16 (MKAAFVLALCASLASA). The cysteines at positions 36 and 46 are disulfide-linked.

It belongs to the MC69 virulence factor family.

The protein resides in the secreted. Its function is as follows. Secreted protein required for appressorial penetration of intact host epidermal cells and for pathogenicity. The polypeptide is Secreted virulence factor MC69 (Pyricularia oryzae (strain 70-15 / ATCC MYA-4617 / FGSC 8958) (Rice blast fungus)).